The primary structure comprises 257 residues: Phosphatidylglycerol--prolipoprotein diacylglyceryl transferase (257 aa).

7 helical membrane passes run 13–33 (FGPI…AVGG), 49–69 (FLLN…RLMF), 88–108 (IYEG…AGLY), 123–143 (FAVV…IFNH), 152–172 (FFFG…FLLI), 186–202 (YQFW…RGVF), and 223–243 (IGLF…AYWM). Arg-136 lines the a 1,2-diacyl-sn-glycero-3-phospho-(1'-sn-glycerol) pocket.

Belongs to the Lgt family.

The protein localises to the cell membrane. It carries out the reaction L-cysteinyl-[prolipoprotein] + a 1,2-diacyl-sn-glycero-3-phospho-(1'-sn-glycerol) = an S-1,2-diacyl-sn-glyceryl-L-cysteinyl-[prolipoprotein] + sn-glycerol 1-phosphate + H(+). Its pathway is protein modification; lipoprotein biosynthesis (diacylglyceryl transfer). Catalyzes the transfer of the diacylglyceryl group from phosphatidylglycerol to the sulfhydryl group of the N-terminal cysteine of a prolipoprotein, the first step in the formation of mature lipoproteins. This Caldanaerobacter subterraneus subsp. tengcongensis (strain DSM 15242 / JCM 11007 / NBRC 100824 / MB4) (Thermoanaerobacter tengcongensis) protein is Phosphatidylglycerol--prolipoprotein diacylglyceryl transferase.